Consider the following 298-residue polypeptide: HTH-type transcriptional regulator ArgP (298 aa).

Residues 4-60 (LDYKWIEALDAVVAQGGFERAAEELYISQSAVSQRIKQLERFLAQPVLIREQPPKPT) enclose the HTH lysR-type domain. Positions 21-40 (FERAAEELYISQSAVSQRIK) form a DNA-binding region, H-T-H motif.

The protein belongs to the LysR transcriptional regulatory family. In terms of assembly, homodimer.

Controls the transcription of genes involved in arginine and lysine metabolism. The protein is HTH-type transcriptional regulator ArgP of Vibrio vulnificus (strain CMCP6).